Consider the following 339-residue polypeptide: MEHARDLTLLPKAHLHLHFTGSMRPSTLLELADKYGVRLPDALTAGEPPKLRATDERGWFRFQRLYDAARSCLREPDDIRRLVREAAEEDVRDGSGWLEIQVDPTSYAPLLGGMIPAVEIILDAVDAASRETGLGMRVLIAANRMKHPLDARTLARLAVRYADRGIVGFGLSNDERRGMARDFDRAFAIAREGGLLAAPHGGELTGPSSVRDCLDDLHASRIGHGVRAAEDPRLLKRLADRQITCEVCPASNVALGVYERPEDVPLRTLFEAGVPMALGADDPLLFGSRLAAQYEIARRHHAFTDTELAELARQSVRGSAAPDDVQAKLLAGIDHWLTG.

Zn(2+) is bound by residues H16, H18, and H200. Residue H18 participates in substrate binding. The Proton donor role is filled by E203. D281 provides a ligand contact to Zn(2+). Residue D282 coordinates substrate.

This sequence belongs to the metallo-dependent hydrolases superfamily. Adenosine and AMP deaminases family. The cofactor is Zn(2+).

Putative nucleoside deaminase. May catalyze the hydrolytic deamination of adenosine or some similar substrate and play a role in purine metabolism. The sequence is that of Putative adenosine/adenine deaminase from Streptomyces virginiae (Streptomyces cinnamonensis).